The following is a 160-amino-acid chain: Endoribonuclease YbeY (160 aa).

Histidine 125, histidine 129, and histidine 135 together coordinate Zn(2+).

Belongs to the endoribonuclease YbeY family. It depends on Zn(2+) as a cofactor.

The protein resides in the cytoplasm. Functionally, single strand-specific metallo-endoribonuclease involved in late-stage 70S ribosome quality control and in maturation of the 3' terminus of the 16S rRNA. In Leuconostoc citreum (strain KM20), this protein is Endoribonuclease YbeY.